The chain runs to 873 residues: DNA helicase/primase complex-associated protein (873 aa).

A disordered region spans residues 394–422; sequence PPLPRDDGDGENNVVEVSSSTGGAHPPSD.

It belongs to the herpesviridae HEPA family. In terms of assembly, associates with the primase and the helicase to form the helicase-primase complex. Interacts with the origin-binding protein. Interacts with the polymerase catalytic subunit.

It is found in the host nucleus. Component of the helicase/primase complex. Unwinds the DNA at the replication forks and generates single-stranded DNA for both leading and lagging strand synthesis. The primase synthesizes short RNA primers on the lagging strand that the polymerase presumably elongates using dNTPs. The primase-associated factor has no known catalytic activity in the complex and may serve to facilitate the formation of the replisome by directly interacting with the origin-binding protein and the polymerase. The polypeptide is DNA helicase/primase complex-associated protein (UL102) (Homo sapiens (Human)).